We begin with the raw amino-acid sequence, 225 residues long: NAD(P)H-quinone oxidoreductase subunit K, chloroplastic (225 aa).

Positions 43, 44, 108, and 139 each coordinate [4Fe-4S] cluster.

The protein belongs to the complex I 20 kDa subunit family. NDH is composed of at least 16 different subunits, 5 of which are encoded in the nucleus. The cofactor is [4Fe-4S] cluster.

It is found in the plastid. The protein localises to the chloroplast thylakoid membrane. It carries out the reaction a plastoquinone + NADH + (n+1) H(+)(in) = a plastoquinol + NAD(+) + n H(+)(out). The enzyme catalyses a plastoquinone + NADPH + (n+1) H(+)(in) = a plastoquinol + NADP(+) + n H(+)(out). Its function is as follows. NDH shuttles electrons from NAD(P)H:plastoquinone, via FMN and iron-sulfur (Fe-S) centers, to quinones in the photosynthetic chain and possibly in a chloroplast respiratory chain. The immediate electron acceptor for the enzyme in this species is believed to be plastoquinone. Couples the redox reaction to proton translocation, and thus conserves the redox energy in a proton gradient. In Hordeum vulgare (Barley), this protein is NAD(P)H-quinone oxidoreductase subunit K, chloroplastic.